Here is a 74-residue protein sequence, read N- to C-terminus: Probable molt-inhibiting hormone (74 aa).

Cystine bridges form between cysteine 6/cysteine 43, cysteine 23/cysteine 39, and cysteine 26/cysteine 52. At alanine 74 the chain carries Alanine amide.

It is found in the secreted. In terms of biological role, inhibits Y-organs where molting hormone (ecdysteroid) is secreted. A molting cycle is initiated when MIH secretion diminishes or stops. Has little or no hyperglycemic activity. This is Probable molt-inhibiting hormone from Jasus lalandii (Cape rock lobster).